The sequence spans 381 residues: Succinyl-diaminopimelate desuccinylase (381 aa).

H76 lines the Zn(2+) pocket. Residue D78 is part of the active site. D107 provides a ligand contact to Zn(2+). The Proton acceptor role is filled by E140. Positions 141, 169, and 354 each coordinate Zn(2+).

The protein belongs to the peptidase M20A family. DapE subfamily. Homodimer. It depends on Zn(2+) as a cofactor. Requires Co(2+) as cofactor.

It carries out the reaction N-succinyl-(2S,6S)-2,6-diaminopimelate + H2O = (2S,6S)-2,6-diaminopimelate + succinate. The protein operates within amino-acid biosynthesis; L-lysine biosynthesis via DAP pathway; LL-2,6-diaminopimelate from (S)-tetrahydrodipicolinate (succinylase route): step 3/3. Catalyzes the hydrolysis of N-succinyl-L,L-diaminopimelic acid (SDAP), forming succinate and LL-2,6-diaminopimelate (DAP), an intermediate involved in the bacterial biosynthesis of lysine and meso-diaminopimelic acid, an essential component of bacterial cell walls. This is Succinyl-diaminopimelate desuccinylase from Gluconobacter oxydans (strain 621H) (Gluconobacter suboxydans).